The chain runs to 513 residues: ATP synthase subunit alpha (513 aa).

169–176 (GDRQTGKT) serves as a coordination point for ATP.

This sequence belongs to the ATPase alpha/beta chains family. As to quaternary structure, F-type ATPases have 2 components, CF(1) - the catalytic core - and CF(0) - the membrane proton channel. CF(1) has five subunits: alpha(3), beta(3), gamma(1), delta(1), epsilon(1). CF(0) has three main subunits: a(1), b(2) and c(9-12). The alpha and beta chains form an alternating ring which encloses part of the gamma chain. CF(1) is attached to CF(0) by a central stalk formed by the gamma and epsilon chains, while a peripheral stalk is formed by the delta and b chains.

The protein resides in the cell inner membrane. It catalyses the reaction ATP + H2O + 4 H(+)(in) = ADP + phosphate + 5 H(+)(out). Its function is as follows. Produces ATP from ADP in the presence of a proton gradient across the membrane. The alpha chain is a regulatory subunit. This Bordetella avium (strain 197N) protein is ATP synthase subunit alpha.